The sequence spans 75 residues: Putative primary metabolism protein HVA1 (75 aa).

The segment covering 1-13 (MSVQDKQGQNINV) has biased composition (polar residues). Disordered stretches follow at residues 1-24 (MSVQ…YRGG) and 40-75 (AAEK…DKQK).

Its function is as follows. May play a role in primary metabolism. The polypeptide is Putative primary metabolism protein HVA1 (Cryptococcus neoformans var. grubii serotype A (strain H99 / ATCC 208821 / CBS 10515 / FGSC 9487) (Filobasidiella neoformans var. grubii)).